We begin with the raw amino-acid sequence, 814 residues long: MVKQTIQIFARVKPPVRKHQQGIYSIDEDEKLIPSLEIILPRDLADGFVNNKRESYKFKFQRIFDQDANQETVFENIAKPVAGSVLAGYNGTIFAYGQTGSGKTFTITGGAERYSDRGIIPRTLSYIFEQLQKDSSKIYTTHISYLEIYNECGYDLLDPRHEASSLEDLPKVTILEDPDQNIHLKNLTLHQATTEEEALNLLFLGDTNRMIAETPMNQASTRSHCIFTIHLSSKEPGSATVRHAKLHLVDLAGSERVAKTGVGGHLLTEAKYINLSLHYLEQVIIALSEKHRSHIPYRNSMMTSVLRDSLGGNCMTTMIATLSLEKRNLDESISTCRFAQRVALIKNEAVLNEEINPRLVIKRLQKEIQELKDELAMVTGEQRTEALTEAELLQLEKLITSFLEDQDSDSRLEVGADMRKVHHCFHHLKKLLNDKKILENNTVSSESKDQDCQEPLKEEEYRKLRDILKQRDNEINILVNMLKKEKKKAQEALHLAGMDRREFRQSQSPPFRLGNPEEGQRMRLSSAPSQAQDFSILGKRSSLLHKKIGMREEMSLGCQEAFEIFKRDHADSVTIDDNKQILKQRFSEAKALGESINEARSKIGHLKEEITQRHIQQVALGISENMAVPLMPDQQEEKLRSQLEEEKRRYKTMFTRLKALKVEIEHLQLLMDKAKVKLQKEFEVWWAEEATNLQVNSPAVNSLDHTKPFLQTSDSQHEWSQLLSNKSSGGWEVQDQGTGRFDVCDVNARKILPSPCPSPHSQKQSSTSTPLEDSIPKRPVSSIPLTGDSQTDSDIIAFIKARQSILQKQCLGSN.

A Kinesin motor domain is found at 5-345; the sequence is TIQIFARVKP…CRFAQRVALI (341 aa). 97–104 serves as a coordination point for ATP; it reads GQTGSGKT. Coiled-coil stretches lie at residues 356-385, 456-494, and 588-683; these read NPRLVIKRLQKEIQELKDELAMVTGEQRTE, LKEEEYRKLRDILKQRDNEINILVNMLKKEKKKAQEALH, and EAKA…KEFE. The interval 752 to 788 is disordered; the sequence is LPSPCPSPHSQKQSSTSTPLEDSIPKRPVSSIPLTGD. The span at 759–771 shows a compositional bias: polar residues; sequence PHSQKQSSTSTPL.

The protein belongs to the TRAFAC class myosin-kinesin ATPase superfamily. Kinesin family.

The protein localises to the cytoplasm. The protein resides in the cytoskeleton. This is Kinesin-like protein KIF6 (KIF6) from Homo sapiens (Human).